The following is a 95-amino-acid chain: Aspartyl/glutamyl-tRNA(Asn/Gln) amidotransferase subunit C (95 aa).

This sequence belongs to the GatC family. As to quaternary structure, heterotrimer of A, B and C subunits.

It catalyses the reaction L-glutamyl-tRNA(Gln) + L-glutamine + ATP + H2O = L-glutaminyl-tRNA(Gln) + L-glutamate + ADP + phosphate + H(+). The enzyme catalyses L-aspartyl-tRNA(Asn) + L-glutamine + ATP + H2O = L-asparaginyl-tRNA(Asn) + L-glutamate + ADP + phosphate + 2 H(+). Its function is as follows. Allows the formation of correctly charged Asn-tRNA(Asn) or Gln-tRNA(Gln) through the transamidation of misacylated Asp-tRNA(Asn) or Glu-tRNA(Gln) in organisms which lack either or both of asparaginyl-tRNA or glutaminyl-tRNA synthetases. The reaction takes place in the presence of glutamine and ATP through an activated phospho-Asp-tRNA(Asn) or phospho-Glu-tRNA(Gln). In Pelagibacter ubique (strain HTCC1062), this protein is Aspartyl/glutamyl-tRNA(Asn/Gln) amidotransferase subunit C.